The chain runs to 95 residues: Co-chaperonin GroES (95 aa).

It belongs to the GroES chaperonin family. As to quaternary structure, heptamer of 7 subunits arranged in a ring. Interacts with the chaperonin GroEL.

It is found in the cytoplasm. Together with the chaperonin GroEL, plays an essential role in assisting protein folding. The GroEL-GroES system forms a nano-cage that allows encapsulation of the non-native substrate proteins and provides a physical environment optimized to promote and accelerate protein folding. GroES binds to the apical surface of the GroEL ring, thereby capping the opening of the GroEL channel. The polypeptide is Co-chaperonin GroES (Novosphingobium aromaticivorans (strain ATCC 700278 / DSM 12444 / CCUG 56034 / CIP 105152 / NBRC 16084 / F199)).